A 384-amino-acid polypeptide reads, in one-letter code: Anhydro-N-acetylmuramic acid kinase (384 aa).

Position 9-16 (9-16) interacts with ATP; the sequence is GTSADGVD.

Belongs to the anhydro-N-acetylmuramic acid kinase family.

It carries out the reaction 1,6-anhydro-N-acetyl-beta-muramate + ATP + H2O = N-acetyl-D-muramate 6-phosphate + ADP + H(+). The protein operates within amino-sugar metabolism; 1,6-anhydro-N-acetylmuramate degradation. It functions in the pathway cell wall biogenesis; peptidoglycan recycling. In terms of biological role, catalyzes the specific phosphorylation of 1,6-anhydro-N-acetylmuramic acid (anhMurNAc) with the simultaneous cleavage of the 1,6-anhydro ring, generating MurNAc-6-P. Is required for the utilization of anhMurNAc either imported from the medium or derived from its own cell wall murein, and thus plays a role in cell wall recycling. This chain is Anhydro-N-acetylmuramic acid kinase, found in Synechococcus sp. (strain CC9311).